The sequence spans 435 residues: Probable alpha-galactosidase B (435 aa).

The signal sequence occupies residues 1-18 (MLTSLSLTALALLPSANA). An intrachain disulfide couples Cys41 to Cys73. Asn81 carries an N-linked (GlcNAc...) asparagine glycan. A disulfide bridge connects residues Cys123 and Cys153. Asp151 acts as the Nucleophile in catalysis. Residues Asn158 and Asn176 are each glycosylated (N-linked (GlcNAc...) asparagine). A substrate-binding site is contributed by 221 to 225 (DWGQA). Asn232 carries N-linked (GlcNAc...) asparagine glycosylation. Residue Asp243 is the Proton donor of the active site. Asn378 carries an N-linked (GlcNAc...) asparagine glycan.

The protein belongs to the glycosyl hydrolase 27 family.

It is found in the secreted. It carries out the reaction Hydrolysis of terminal, non-reducing alpha-D-galactose residues in alpha-D-galactosides, including galactose oligosaccharides, galactomannans and galactolipids.. Its function is as follows. Hydrolyzes a variety of simple alpha-D-galactoside as well as more complex molecules such as oligosaccharides and polysaccharides. This chain is Probable alpha-galactosidase B (agl1), found in Penicillium simplicissimum.